The primary structure comprises 175 residues: Lithostathine (175 aa).

The N-terminal stretch at 1–26 (MLPSLGLPRLSWMLLSCLMLLSQIQG) is a signal peptide. Residues 27–37 (ENSQKELPSAR) constitute a propeptide that is removed on maturation. The region spanning 38-173 (ISCPSGSMAY…NLNLPYVCKF (136 aa)) is the C-type lectin domain. 3 cysteine pairs are disulfide-bonded: Cys40–Cys51, Cys68–Cys171, and Cys146–Cys163.

Cleaved to give an A chain and a B chain joined by a disulfide bond. In pancreatic acinar cells.

It is found in the secreted. Might act as an inhibitor of spontaneous calcium carbonate precipitation. In Bos taurus (Bovine), this protein is Lithostathine (PTP).